Reading from the N-terminus, the 214-residue chain is Probable transaldolase (214 aa).

The active-site Schiff-base intermediate with substrate is K83.

This sequence belongs to the transaldolase family. Type 3B subfamily.

It localises to the cytoplasm. It carries out the reaction D-sedoheptulose 7-phosphate + D-glyceraldehyde 3-phosphate = D-erythrose 4-phosphate + beta-D-fructose 6-phosphate. Its pathway is carbohydrate degradation; pentose phosphate pathway; D-glyceraldehyde 3-phosphate and beta-D-fructose 6-phosphate from D-ribose 5-phosphate and D-xylulose 5-phosphate (non-oxidative stage): step 2/3. Its function is as follows. Transaldolase is important for the balance of metabolites in the pentose-phosphate pathway. The polypeptide is Probable transaldolase (Streptococcus pyogenes serotype M2 (strain MGAS10270)).